The following is a 594-amino-acid chain: APOBEC1 complementation factor (594 aa).

3 RRM domains span residues 56–134 (CEIF…ASVD), 136–218 (CRLF…WAEP), and 231–303 (KILY…LAKP). Positions 360 to 409 (HFPATKGHLSNRAIIRAPSVREIYMNVPVGAAGVRGLGGRGYLAYTGLGR) are required for nuclear localization. Phosphothreonine is present on Thr499.

In terms of assembly, part of the apolipoprotein B mRNA editing complex with APOBEC1. Interacts with TNPO2; TNPO2 may be responsible for transport of A1CF into the nucleus. Interacts with SYNCRIP. Interacts with CELF2/CUGBP2. Interacts with RBM47. As to expression, widely expressed with highest levels in brain, liver, pancreas, colon and spleen.

Its subcellular location is the nucleus. The protein resides in the endoplasmic reticulum. It is found in the cytoplasm. Its function is as follows. Essential component of the apolipoprotein B mRNA editing enzyme complex which is responsible for the postranscriptional editing of a CAA codon for Gln to a UAA codon for stop in APOB mRNA. Binds to APOB mRNA and is probably responsible for docking the catalytic subunit, APOBEC1, to the mRNA to allow it to deaminate its target cytosine. The complex also protects the edited APOB mRNA from nonsense-mediated decay. The chain is APOBEC1 complementation factor (A1CF) from Homo sapiens (Human).